The chain runs to 83 residues: Short neurotoxin 3FTx-Oxy4 (83 aa).

A signal peptide spans 1-21 (MKTLLLTLVVVTIVCLDLGYT). 4 cysteine pairs are disulfide-bonded: Cys-24–Cys-45, Cys-38–Cys-62, Cys-64–Cys-75, and Cys-76–Cys-81.

Belongs to the three-finger toxin family. Short-chain subfamily. Type I alpha-neurotoxin sub-subfamily. Expressed by the venom gland.

The protein localises to the secreted. In terms of biological role, binds to muscle nicotinic acetylcholine receptor (nAChR) and inhibit acetylcholine from binding to the receptor, thereby impairing neuromuscular transmission. The protein is Short neurotoxin 3FTx-Oxy4 of Oxyuranus microlepidotus (Inland taipan).